Reading from the N-terminus, the 385-residue chain is Di-N-acetylchitobiase (385 aa).

The N-terminal stretch at 1-38 (MSRPQLRRWRLVSSPPSGVPGLALLALLALLALRLAAG) is a signal peptide. In terms of domain architecture, GH18 spans 39 to 385 (TDCPCPEPEL…EVLKPKLLQR (347 aa)). Glu143 acts as the Proton donor in catalysis. N-linked (GlcNAc...) asparagine glycans are attached at residues Asn193, Asn228, Asn262, and Asn299.

This sequence belongs to the glycosyl hydrolase 18 family.

It localises to the lysosome. Involved in the degradation of asparagine-linked glycoproteins. Hydrolyze of N-acetyl-beta-D-glucosamine (1-4)N-acetylglucosamine chitobiose core from the reducing end of the bond, it requires prior cleavage by glycosylasparaginase. In Homo sapiens (Human), this protein is Di-N-acetylchitobiase (CTBS).